The sequence spans 372 residues: N-methyl-L-tryptophan oxidase (372 aa).

4–34 contacts FAD; that stretch reads DLIIIGSGSVGAAAGYYATRAGLKVLMTDAH. Position 307 is an S-8alpha-FAD cysteine (C307).

Belongs to the MSOX/MTOX family. MTOX subfamily. As to quaternary structure, monomer. It depends on FAD as a cofactor.

It carries out the reaction N(alpha)-methyl-L-tryptophan + O2 + H2O = L-tryptophan + formaldehyde + H2O2. Its function is as follows. Catalyzes the oxidative demethylation of N-methyl-L-tryptophan. This Salmonella typhi protein is N-methyl-L-tryptophan oxidase.